The chain runs to 186 residues: dCTP deaminase (186 aa).

107–112 (KSTYAR) is a dCTP binding site. Residue Glu133 is the Proton donor/acceptor of the active site. DCTP contacts are provided by Gln152, Tyr166, and Gln176.

Belongs to the dCTP deaminase family. Homotrimer.

The enzyme catalyses dCTP + H2O + H(+) = dUTP + NH4(+). The protein operates within pyrimidine metabolism; dUMP biosynthesis; dUMP from dCTP (dUTP route): step 1/2. Functionally, catalyzes the deamination of dCTP to dUTP. The sequence is that of dCTP deaminase from Campylobacter jejuni (strain RM1221).